The sequence spans 209 residues: Holliday junction branch migration complex subunit RuvA (209 aa).

The domain I stretch occupies residues 1–64 (MIGKLKGLVD…EDSIKLYGFA (64 aa)). Residues 65–143 (SETEREWFRL…ALGASLHTLA (79 aa)) are domain II. Residues 144 to 154 (GAGSEGAGVEA) form a flexible linker region. The tract at residues 155-209 (PASGAVSDAISVLVNLGFGRSQAAVAVAASSKALGSGAGAGDLAKRALQELAQSG) is domain III.

Belongs to the RuvA family. Homotetramer. Forms an RuvA(8)-RuvB(12)-Holliday junction (HJ) complex. HJ DNA is sandwiched between 2 RuvA tetramers; dsDNA enters through RuvA and exits via RuvB. An RuvB hexamer assembles on each DNA strand where it exits the tetramer. Each RuvB hexamer is contacted by two RuvA subunits (via domain III) on 2 adjacent RuvB subunits; this complex drives branch migration. In the full resolvosome a probable DNA-RuvA(4)-RuvB(12)-RuvC(2) complex forms which resolves the HJ.

It is found in the cytoplasm. The RuvA-RuvB-RuvC complex processes Holliday junction (HJ) DNA during genetic recombination and DNA repair, while the RuvA-RuvB complex plays an important role in the rescue of blocked DNA replication forks via replication fork reversal (RFR). RuvA specifically binds to HJ cruciform DNA, conferring on it an open structure. The RuvB hexamer acts as an ATP-dependent pump, pulling dsDNA into and through the RuvAB complex. HJ branch migration allows RuvC to scan DNA until it finds its consensus sequence, where it cleaves and resolves the cruciform DNA. The sequence is that of Holliday junction branch migration complex subunit RuvA from Methylocella silvestris (strain DSM 15510 / CIP 108128 / LMG 27833 / NCIMB 13906 / BL2).